Reading from the N-terminus, the 494-residue chain is Serine carboxypeptidase-like 21 (494 aa).

Positions 1 to 23 (MGRLVEAIIASILLSLCFTITKS) are cleaved as a signal peptide. 2 N-linked (GlcNAc...) asparagine glycosylation sites follow: asparagine 37 and asparagine 69. Disulfide bonds link cysteine 85–cysteine 383, cysteine 247–cysteine 263, and cysteine 286–cysteine 350. Serine 179 is an active-site residue. N-linked (GlcNAc...) asparagine glycans are attached at residues asparagine 198 and asparagine 248. Asparagine 402 carries an N-linked (GlcNAc...) asparagine glycan. The active site involves aspartate 418. Residue asparagine 460 is glycosylated (N-linked (GlcNAc...) asparagine). Histidine 471 is an active-site residue.

This sequence belongs to the peptidase S10 family. As to expression, expressed in flowers and siliques.

It localises to the secreted. Its function is as follows. Probable carboxypeptidase. The sequence is that of Serine carboxypeptidase-like 21 (SCPL21) from Arabidopsis thaliana (Mouse-ear cress).